The following is a 588-amino-acid chain: Urease subunit alpha (588 aa).

One can recognise a Urease domain in the interval 149-588 (GGIDTHIHFI…LPMAQRYFLF (440 aa)). Positions 154, 156, and 237 each coordinate Ni(2+). Lys237 is subject to N6-carboxylysine. His239 lines the substrate pocket. Residues His266 and His292 each coordinate Ni(2+). Catalysis depends on His340, which acts as the Proton donor. Residue Asp380 coordinates Ni(2+).

Belongs to the metallo-dependent hydrolases superfamily. Urease alpha subunit family. Heterotrimer of UreA (gamma), UreB (beta) and UreC (alpha) subunits. Three heterotrimers associate to form the active enzyme. It depends on Ni cation as a cofactor. In terms of processing, carboxylation allows a single lysine to coordinate two nickel ions.

It localises to the cytoplasm. It carries out the reaction urea + 2 H2O + H(+) = hydrogencarbonate + 2 NH4(+). The protein operates within nitrogen metabolism; urea degradation; CO(2) and NH(3) from urea (urease route): step 1/1. The chain is Urease subunit alpha from Opitutus terrae (strain DSM 11246 / JCM 15787 / PB90-1).